The sequence spans 207 residues: Segregation and condensation protein B (207 aa).

The tract at residues 173–207 (DDTAESDNDSADLYYRQFEQTLNETGPETAPKGEQ) is disordered.

The protein belongs to the ScpB family. As to quaternary structure, homodimer. Homodimerization may be required to stabilize the binding of ScpA to the Smc head domains. Component of a cohesin-like complex composed of ScpA, ScpB and the Smc homodimer, in which ScpA and ScpB bind to the head domain of Smc. The presence of the three proteins is required for the association of the complex with DNA.

It is found in the cytoplasm. Participates in chromosomal partition during cell division. May act via the formation of a condensin-like complex containing Smc and ScpA that pull DNA away from mid-cell into both cell halves. The chain is Segregation and condensation protein B from Latilactobacillus sakei subsp. sakei (strain 23K) (Lactobacillus sakei subsp. sakei).